Here is a 505-residue protein sequence, read N- to C-terminus: L-carnitine/gamma-butyrobetaine antiporter (505 aa).

The next 12 helical transmembrane spans lie at isoleucine 10–valine 30, tryptophan 51–phenylalanine 71, isoleucine 92–isoleucine 112, glycine 143–valine 163, phenylalanine 195–valine 215, leucine 231–leucine 251, serine 263–methionine 283, tryptophan 316–alanine 336, leucine 347–glycine 367, leucine 403–isoleucine 423, leucine 446–leucine 466, and alanine 475–isoleucine 495.

The protein belongs to the BCCT transporter (TC 2.A.15) family. CaiT subfamily. In terms of assembly, homotrimer.

The protein localises to the cell inner membrane. The enzyme catalyses 4-(trimethylamino)butanoate(in) + (R)-carnitine(out) = 4-(trimethylamino)butanoate(out) + (R)-carnitine(in). It participates in amine and polyamine metabolism; carnitine metabolism. Its function is as follows. Catalyzes the exchange of L-carnitine for gamma-butyrobetaine. In Salmonella choleraesuis (strain SC-B67), this protein is L-carnitine/gamma-butyrobetaine antiporter.